The primary structure comprises 236 residues: Small ribosomal subunit protein uS3 (236 aa).

The 69-residue stretch at 39–107 folds into the KH type-2 domain; sequence IRKFLKREMY…EVFINIKEAK (69 aa). The segment covering 214-229 has biased composition (basic and acidic residues); the sequence is PEKKEESKSGDKEVRS. The segment at 214-236 is disordered; the sequence is PEKKEESKSGDKEVRSKSRRGRQ.

Belongs to the universal ribosomal protein uS3 family. In terms of assembly, part of the 30S ribosomal subunit. Forms a tight complex with proteins S10 and S14.

Functionally, binds the lower part of the 30S subunit head. Binds mRNA in the 70S ribosome, positioning it for translation. This chain is Small ribosomal subunit protein uS3, found in Helicobacter hepaticus (strain ATCC 51449 / 3B1).